We begin with the raw amino-acid sequence, 552 residues long: Glycosyltransferase family 92 protein RCOM_0530710 (552 aa).

Residues 12–34 (WNRFFWCTLLLVLSCVLFTASTF) form a helical; Signal-anchor membrane-spanning segment. In terms of domain architecture, GT92 spans 277–520 (KPHEMCICTM…GTRAVEPPDW (244 aa)).

Belongs to the glycosyltransferase 92 family.

It localises to the membrane. The sequence is that of Glycosyltransferase family 92 protein RCOM_0530710 from Ricinus communis (Castor bean).